The primary structure comprises 560 residues: Eukaryotic translation initiation factor 3 subunit D-1 (560 aa).

The disordered stretch occupies residues 98 to 166 (VQKPPHQRGR…RGPPPKMRES (69 aa)). The segment covering 100–121 (KPPHQRGRFRNMRNSRSGRGRN) has biased composition (basic residues). Thr-128 is subject to Phosphothreonine. The segment covering 147 to 156 (GRGMGKKFGH) has biased composition (basic residues). An RNA gate region spans residues 291–305 (EFDLLTVNESSVEPP).

Belongs to the eIF-3 subunit D family. In terms of assembly, component of the eukaryotic translation initiation factor 3 (eIF-3) complex. The eIF-3 complex interacts with pix.

It is found in the cytoplasm. Functionally, mRNA cap-binding component of the eukaryotic translation initiation factor 3 (eIF-3) complex, which is involved in protein synthesis of a specialized repertoire of mRNAs and, together with other initiation factors, stimulates binding of mRNA and methionyl-tRNAi to the 40S ribosome. The eIF-3 complex specifically targets and initiates translation of a subset of mRNAs involved in cell proliferation. In the eIF-3 complex, eif3d specifically recognizes and binds the 7-methylguanosine cap of a subset of mRNAs. In Drosophila simulans (Fruit fly), this protein is Eukaryotic translation initiation factor 3 subunit D-1.